The primary structure comprises 1451 residues: DNA excision repair protein ERCC-6-like (1451 aa).

A TPR 1 repeat occupies 27-60 (YDRYRQKGKEAALNGELPRALELFQLAYQLQPSE). The region spanning 118-286 (SLYRDGRKGG…WALFDFACQG (169 aa)) is the Helicase ATP-binding domain. Residue 131 to 138 (DDMGLGKT) coordinates ATP. The short motif at 237 to 240 (DEAH) is the DEAH box element. The region spanning 479 to 639 (FVVSLMECLR…PFRYFSKQEL (161 aa)) is the Helicase C-terminal domain. 7 disordered regions span residues 647-669 (DTRS…RSDT), 778-804 (NSFD…ETAS), 935-1006 (DDTS…ATTD), 1035-1054 (DEEV…EFQL), 1063-1083 (LEEP…NYND), 1096-1140 (RSTP…LTSS), and 1182-1343 (LLEN…SAEL). Over residues 781-804 (DEPEFEEDEQNLPSAEDAEMETAS) the composition is skewed to acidic residues. Polar residues-rich tracts occupy residues 944 to 964 (SDFN…SPSL) and 992 to 1002 (QVLSSPLSQHE). Ser-961 carries the phosphoserine modification. Positions 1035-1050 (DEEVHEVEESAAEESP) are enriched in acidic residues. Over residues 1063–1074 (LEEPSINHDKQN) the composition is skewed to basic and acidic residues. Acidic residues predominate over residues 1121–1132 (DTEEEEEEEEES). The segment covering 1213 to 1230 (VQTSSGDNSKSYETSEAN) has biased composition (polar residues). The segment covering 1244-1278 (YREGKNTSDKVSESNETHSEEFAEEEKPSGDKSES) has biased composition (basic and acidic residues). Residues 1310–1341 (SEADESVVEEEEPSGETLNTEESEMGEEEESA) are compositionally biased toward acidic residues. The stretch at 1402 to 1435 (YNLLVLSGKQSLAEGRKQEALDFFLKAIDINTGD) is one TPR 2 repeat.

Belongs to the SNF2/RAD54 helicase family.

Its subcellular location is the chromosome. It localises to the centromere. The protein localises to the kinetochore. The enzyme catalyses ATP + H2O = ADP + phosphate + H(+). Functionally, DNA helicase that acts as a tension sensor that associates with catenated DNA which is stretched under tension until it is resolved during anaphase. Functions as ATP-dependent DNA translocase. Can promote Holliday junction branch migration (in vitro). This is DNA excision repair protein ERCC-6-like (ercc6l) from Danio rerio (Zebrafish).